We begin with the raw amino-acid sequence, 580 residues long: Tyrosyl-DNA phosphodiesterase 1 (580 aa).

The interval Ala-65 to Ala-117 is disordered. Positions Ser-87 to Ser-110 are enriched in low complexity. His-248 serves as the catalytic Nucleophile. Lys-250 is a binding site for substrate. An interaction with DNA region spans residues Ser-387–Ser-390. The active-site Proton donor/acceptor is the His-479. Lys-481 contributes to the substrate binding site.

Belongs to the tyrosyl-DNA phosphodiesterase family. In terms of tissue distribution, expressed in the body and at higher levels in the head. Expressed in the delaminating neuroblasts and a few ganglion mother cells in stage 11-14 embryonic central nervous system. Weak expression is seen in gonads at stage 16. Expressed in the brain; expression is regulated by DIP2.

The protein resides in the nucleus. It is found in the cytoplasm. Functionally, DNA repair enzyme that can remove a variety of covalent adducts from DNA through hydrolysis of a 3'-phosphodiester bond, giving rise to DNA with a free 3' phosphate. Catalyzes the hydrolysis of dead-end complexes between DNA and the topoisomerase I active site tyrosine residue. Hydrolyzes 3'-phosphoglycolates on protruding 3' ends on DNA double-strand breaks due to DNA damage by radiation and free radicals. Acts on blunt-ended double-strand DNA breaks and on single-stranded DNA. May have low 3'exonuclease activity and may be able to remove a single nucleoside from the 3'end of DNA and RNA molecules with 3'hydroxyl groups. Has no exonuclease activity towards DNA or RNA with a 3'phosphate. Required for normal polarization of epidermal cells, correct subcellular location of the Crb complex to the apical lateral membrane, and for normal neuronal development during embryonic development. Contributes to maintenance of epithelial cells in response to topoisomerase-1-mediated and oxidative DNA damage. Required for precise axonal bifurcation in mushroom body neurons. Required for maintenance of normal neuronal function. This is Tyrosyl-DNA phosphodiesterase 1 from Drosophila melanogaster (Fruit fly).